The following is a 405-amino-acid chain: uncharacterized protein (405 aa).

10 helical membrane-spanning segments follow: residues 9-29 (VFAL…VTIV), 41-61 (VFLA…ASFC), 74-94 (VLAG…YSVT), 98-118 (QAFF…GAFF), 138-158 (ANGV…GLGG), 168-190 (LVVG…LHVN), 227-247 (ALAG…AVLH), 252-272 (WWGM…VIAI), 291-311 (LVMS…LCAL), and 373-393 (IAFI…LAQP).

It belongs to the major facilitator superfamily. Drug:H(+) antiporter-3 (DHA3) (TC 2.A.1.21) family.

It is found in the cell membrane. This is an uncharacterized protein from Bacillus subtilis (strain 168).